Consider the following 216-residue polypeptide: MDITASMVKELREKTGAGMMDCKKALTEAEGNMDRAVEVLRERGLAAVAKKSGRIAAEGLVESYIHGGRIGVIVEVNSETDFVAKNQEFKDFVKDVALHIAASNPQYVRREDVDPALVEKEKEILTKQALNEGKPEKIVEKMVEGRIDKFYKEICLLEQPFVKDPDVTVGDLLTEKISKIGENISIRRFTRYEVGEGIEKKEENFAEEVAKQMAQN.

Residues 80-83 (TDFV) are involved in Mg(2+) ion dislocation from EF-Tu.

It belongs to the EF-Ts family.

It is found in the cytoplasm. Its function is as follows. Associates with the EF-Tu.GDP complex and induces the exchange of GDP to GTP. It remains bound to the aminoacyl-tRNA.EF-Tu.GTP complex up to the GTP hydrolysis stage on the ribosome. This is Elongation factor Ts from Alkaliphilus oremlandii (strain OhILAs) (Clostridium oremlandii (strain OhILAs)).